The following is a 314-amino-acid chain: uncharacterized protein (314 aa).

The next 2 helical transmembrane spans lie at 23-43 (LALGPVHPGGPTLIDLLMALF) and 98-118 (MASGIGGALSGALGGVMGPLT). Residues 165–184 (GLGSGAGGGDVGGGGAGGTT) are compositionally biased toward gly residues. Residues 165-314 (GLGSGAGGGD…APDEKTDAGE (150 aa)) form a disordered region. A compositionally biased stretch (pro residues) spans 190–202 (GPPPVPTSSPPTT). 2 stretches are compositionally biased toward low complexity: residues 203–212 (PAGAPTKSAT) and 219–232 (ASPASAHMGAAGMP). Residues 221 to 241 (PASAHMGAAGMPMVPPGAMGA) form a helical membrane-spanning segment. The segment covering 294–314 (LLPEHKDFGRIAPDEKTDAGE) has biased composition (basic and acidic residues).

It is found in the cell membrane. This is an uncharacterized protein from Mycobacterium tuberculosis (strain ATCC 25618 / H37Rv).